Reading from the N-terminus, the 340-residue chain is DnaJ homolog subfamily C member 22 (340 aa).

A TM2 domain is found at 1 to 50 (MGKSLLAAYGLWALGGPLGLYHIYLGRDSHALLWMLTLGGFGMGWMWDFW). 7 helical membrane-spanning segments follow: residues 5-25 (LLAA…HIYL), 30-50 (HALL…WDFW), 81-101 (FIGQ…GLSF), 105-125 (FHMV…ATVG), 135-155 (LIAA…MIPI), 186-206 (IGLV…LNTS), and 212-232 (VAGS…ISAL). Residues 278–340 (MACKVLGVNF…LMRLRKSKTL (63 aa)) form the J domain.

Its subcellular location is the membrane. Functionally, may function as a co-chaperone. In Xenopus tropicalis (Western clawed frog), this protein is DnaJ homolog subfamily C member 22 (dnajc22).